Consider the following 1783-residue polypeptide: Doublecortin domain-containing protein 1 (1783 aa).

Positions 93–133 (GLQDCSTHQTASDHSHDEISDLDSYKSNSKNNSCSISASKR) are disordered. The segment covering 117–131 (YKSNSKNNSCSISAS) has biased composition (low complexity). The region spanning 168–252 (KLQPRVIKVT…FLNPFKKIKD (85 aa)) is the Doublecortin 1 domain. One can recognise a Ricin B-type lectin 1 domain in the interval 702–800 (WLITKTGMIL…HIHHGAWTTA (99 aa)). Residues 860 to 880 (ASAQRWAIKHEGTSKPGQWKH) form a disordered region. Residues 925–1015 (PICKTTEPYA…ELWINPDLSI (91 aa)) enclose the Doublecortin 2 domain. The 116-residue stretch at 1151–1266 (SCSPKHSKLH…GAANQKWHYM (116 aa)) folds into the Ricin B-type lectin 2 domain.

In terms of assembly, interacts with dynein intermediate chain, tubulin, RAB8A, RAB3IP, NUDC, PAFAH1B1 and DCTN1.

The protein resides in the midbody. It localises to the midbody ring. Its subcellular location is the cytoplasm. The protein localises to the cytoskeleton. It is found in the spindle. Functionally, microtubule-binding protein which plays an important role in mediating dynein-dependent transport of RAB8A-positive vesicles to the midbody during cytokinesis. This is Doublecortin domain-containing protein 1 from Homo sapiens (Human).